The following is a 392-amino-acid chain: Vascular endothelial growth factor A, long form (392 aa).

Disordered regions lie at residues 1-44 and 73-174; these read MTDR…VEGV and DKPI…GPGR. A compositionally biased stretch (basic and acidic residues) spans 89–104; sequence PGPEKRGEEEKEEERG. 2 stretches are compositionally biased toward low complexity: residues 121 to 143 and 158 to 174; these read AAVC…ASVP and PRSP…GPGR. 3 disulfides stabilise this stretch: Cys-229–Cys-271, Cys-260–Cys-305, and Cys-264–Cys-307. Residue Asn-278 is glycosylated (N-linked (GlcNAc...) asparagine). The span at 309–320 shows a compositional bias: basic and acidic residues; the sequence is PKKDRTKPEKKS. Residues 309-337 form a disordered region; that stretch reads PKKDRTKPEKKSVRGKGKGQKRKRKKSRF. Over residues 321-337 the composition is skewed to basic residues; that stretch reads VRGKGKGQKRKRKKSRF.

The protein belongs to the PDGF/VEGF growth factor family. Homodimer; disulfide-linked. Also found as heterodimer with PGF. Interacts with NRP1. Interacts with isoform 2 of BSG. Interacts with CD82; this interaction inhibits VEGFA-mediated signaling pathway. Post-translationally, produced by use of an alternative upstream CUG codon and post-translationally processed into the N-terminal N-VEGF form and the C-terminal secreted VEGFA form. In terms of tissue distribution, in developing embryos, expressed mainly in the choroid plexus, paraventricular neuroepithelium, placenta and kidney glomeruli. Also found in bronchial epithelium, adrenal gland and in seminiferous tubules of testis. High expression continues in kidney glomeruli and choroid plexus in adults.

It is found in the cytoplasm. It localises to the nucleus. The protein localises to the secreted. Its subcellular location is the endoplasmic reticulum. The protein resides in the golgi apparatus. It is found in the extracellular space. It localises to the extracellular matrix. The protein localises to the cell membrane. Its function is as follows. Participates in the induction of key genes involved in the response to hypoxia and in the induction of angiogenesis such as HIF1A. Involved in protecting cells from hypoxia-mediated cell death. Functionally, growth factor active in angiogenesis, vasculogenesis and endothelial cell growth. Induces endothelial cell proliferation, promotes cell migration, inhibits apoptosis and induces permeabilization of blood vessels. Binds to the FLT1/VEGFR1 and KDR/VEGFR2 receptors, heparan sulfate and heparin. Binds to the NRP1/neuropilin-1 receptor. Binding to NRP1 receptor initiates a signaling pathway needed for motor neuron axon guidance and cell body migration, including for the caudal migration of facial motor neurons from rhombomere 4 to rhombomere 6 during embryonic development. Also binds the DEAR/FBXW7-AS1 receptor. May play a role in increasing vascular permeability during lactation, when increased transport of molecules from the blood is required for efficient milk protein synthesis. The sequence is that of Vascular endothelial growth factor A, long form (Vegfa) from Mus musculus (Mouse).